The primary structure comprises 146 residues: MAKKKVTGLIKLQIQAGQATPAPPVGPALGAHGVNIVEFTKAYNAATEAQRGNIVPVEITVYEDRSFDFKLKTPPAAKLLLKAAGIQKGSGVPHTDKVGSVTWDQCKEIATTKKEDLNANDIEAGAAIIAGTARSMGITVKDAPQK.

This sequence belongs to the universal ribosomal protein uL11 family. In terms of assembly, part of the ribosomal stalk of the 50S ribosomal subunit. Interacts with L10 and the large rRNA to form the base of the stalk. L10 forms an elongated spine to which L12 dimers bind in a sequential fashion forming a multimeric L10(L12)X complex. In terms of processing, one or more lysine residues are methylated.

Its function is as follows. Forms part of the ribosomal stalk which helps the ribosome interact with GTP-bound translation factors. This chain is Large ribosomal subunit protein uL11, found in Corynebacterium jeikeium (strain K411).